The following is a 101-amino-acid chain: Interleukin-8 (101 aa).

Residues 1–22 (MPSQLRVAVLAAFLLSAVLCEG) form the signal peptide. Cystine bridges form between Cys34/Cys61 and Cys36/Cys77.

This sequence belongs to the intercrine alpha (chemokine CxC) family. Homodimer. Interacts with TNFAIP6 (via Link domain); this interaction interferes with chemokine binding to glycosaminoglycans.

Its subcellular location is the secreted. In terms of biological role, chemotactic factor that mediates inflammatory response by attracting neutrophils, basophils, and T-cells to clear pathogens and protect the host from infection. Also plays an important role in neutrophil activation. Released in response to an inflammatory stimulus, exerts its effect by binding to the G-protein-coupled receptors CXCR1 and CXCR2, primarily found in neutrophils, monocytes and endothelial cells. G-protein heterotrimer (alpha, beta, gamma subunits) constitutively binds to CXCR1/CXCR2 receptor and activation by IL8 leads to beta and gamma subunits release from Galpha (GNAI2 in neutrophils) and activation of several downstream signaling pathways including PI3K and MAPK pathways. This Cavia porcellus (Guinea pig) protein is Interleukin-8 (CXCL8).